Consider the following 328-residue polypeptide: tRNA uridine(34) hydroxylase (328 aa).

Residues 130–224 enclose the Rhodanese domain; sequence LDEDTVVLDT…YGKDPEVQGE (95 aa). The Cysteine persulfide intermediate role is filled by cysteine 184.

It belongs to the TrhO family.

The catalysed reaction is uridine(34) in tRNA + AH2 + O2 = 5-hydroxyuridine(34) in tRNA + A + H2O. In terms of biological role, catalyzes oxygen-dependent 5-hydroxyuridine (ho5U) modification at position 34 in tRNAs. The sequence is that of tRNA uridine(34) hydroxylase from Streptococcus pyogenes serotype M28 (strain MGAS6180).